The chain runs to 288 residues: Light-independent protochlorophyllide reductase iron-sulfur ATP-binding protein (288 aa).

ATP-binding positions include 10 to 15 (GIGKST) and Lys39. Ser14 serves as a coordination point for Mg(2+). The [4Fe-4S] cluster site is built by Cys95 and Cys129. Position 180–181 (180–181 (NR)) interacts with ATP.

Belongs to the NifH/BchL/ChlL family. Homodimer. Protochlorophyllide reductase is composed of three subunits; ChlL, ChlN and ChlB. Requires [4Fe-4S] cluster as cofactor.

The protein resides in the plastid. Its subcellular location is the chloroplast. The enzyme catalyses chlorophyllide a + oxidized 2[4Fe-4S]-[ferredoxin] + 2 ADP + 2 phosphate = protochlorophyllide a + reduced 2[4Fe-4S]-[ferredoxin] + 2 ATP + 2 H2O. Its pathway is porphyrin-containing compound metabolism; chlorophyll biosynthesis (light-independent). Component of the dark-operative protochlorophyllide reductase (DPOR) that uses Mg-ATP and reduced ferredoxin to reduce ring D of protochlorophyllide (Pchlide) to form chlorophyllide a (Chlide). This reaction is light-independent. The L component serves as a unique electron donor to the NB-component of the complex, and binds Mg-ATP. The protein is Light-independent protochlorophyllide reductase iron-sulfur ATP-binding protein of Chara vulgaris (Common stonewort).